A 612-amino-acid chain; its full sequence is Vitamin B12 transporter BtuB (612 aa).

An N-terminal signal peptide occupies residues 1 to 20 (MIKKSLLCTALSVTAFSGWA). The short motif at 26 to 33 (DTLVVTAN) is the TonB box element. In terms of domain architecture, TBDR plug spans 38 to 152 (PRSAVLAPIT…IGGVVNIITT (115 aa)). Cyanocob(III)alamin contacts are provided by residues serine 85, asparagine 92, and 110–111 (VS). The TBDR beta-barrel domain occupies 155-612 (KPGTELTAGV…EYTLSGSYTF (458 aa)). A run of 3 beta stranded transmembrane segments spans residues 158 to 165 (TELTAGVG), 169 to 178 (YQNYDVSTQQ), and 184 to 195 (TRVTLMGDYAYT). Positions 199, 211, 213, and 215 each coordinate Ca(2+). Transmembrane regions (beta stranded) follow at residues 217 to 227 (FLSKTLYGALE) and 232 to 248 (DTWS…NRTN). Ca(2+) is bound by residues tyrosine 249, aspartate 250, and aspartate 261. 14 consecutive transmembrane segments (beta stranded) span residues 263 to 277 (RKLY…LRFN), 279 to 296 (ELIQ…KDYN), 309 to 325 (TLDE…NSIV), 328 to 337 (HGNVGAGVDW), 353 to 369 (YDQR…QQLG), 371 to 381 (FTFEGAARSDD), 385 to 400 (FGRH…WEFI), 403 to 417 (YRFI…KAPN), 434 to 443 (QSKQWEGAFE), 449 to 458 (VNWRVSGYRN), 473 to 490 (YFNE…TANF), 494 to 509 (PLAH…SRNA), 517 to 529 (RRSK…QLDW), and 535 to 550 (DWGL…YDTD). Residue threonine 309 participates in cyanocob(III)alamin binding. Residue arginine 517 participates in cyanocob(III)alamin binding. Tyrosine 551 serves as a coordination point for cyanocob(III)alamin. The next 3 beta stranded transmembrane spans lie at 556–570 (PVKM…LAVS), 583–594 (IANRFDKDYETV), and 600–612 (AGRE…SYTF). The short motif at 595 to 612 (YGYATAGREYTLSGSYTF) is the TonB C-terminal box element.

Belongs to the TonB-dependent receptor family. BtuB (TC 1.B.14.3.1) subfamily.

Its subcellular location is the cell outer membrane. Functionally, involved in the active translocation of vitamin B12 (cyanocobalamin) across the outer membrane to the periplasmic space. It derives its energy for transport by interacting with the trans-periplasmic membrane protein TonB. The chain is Vitamin B12 transporter BtuB from Citrobacter freundii.